The following is a 171-amino-acid chain: Lipoprotein signal peptidase (171 aa).

3 helical membrane-spanning segments follow: residues 7 to 27 (GLLA…GLYF), 64 to 84 (IGRW…GLWM), and 88 to 108 (TSRL…GNAI). Catalysis depends on residues Asp-118 and Asp-136. A helical membrane pass occupies residues 128 to 148 (SWYVFNVADAAIVAGVIGLIL).

This sequence belongs to the peptidase A8 family.

The protein resides in the cell inner membrane. The enzyme catalyses Release of signal peptides from bacterial membrane prolipoproteins. Hydrolyzes -Xaa-Yaa-Zaa-|-(S,diacylglyceryl)Cys-, in which Xaa is hydrophobic (preferably Leu), and Yaa (Ala or Ser) and Zaa (Gly or Ala) have small, neutral side chains.. Its pathway is protein modification; lipoprotein biosynthesis (signal peptide cleavage). Functionally, this protein specifically catalyzes the removal of signal peptides from prolipoproteins. The protein is Lipoprotein signal peptidase of Methylobacterium radiotolerans (strain ATCC 27329 / DSM 1819 / JCM 2831 / NBRC 15690 / NCIMB 10815 / 0-1).